A 266-amino-acid chain; its full sequence is Hydroxyethylthiazole kinase (266 aa).

M45 lines the substrate pocket. Positions 120 and 165 each coordinate ATP. Residue A192 participates in substrate binding.

Belongs to the Thz kinase family. Mg(2+) serves as cofactor.

The catalysed reaction is 5-(2-hydroxyethyl)-4-methylthiazole + ATP = 4-methyl-5-(2-phosphooxyethyl)-thiazole + ADP + H(+). It functions in the pathway cofactor biosynthesis; thiamine diphosphate biosynthesis; 4-methyl-5-(2-phosphoethyl)-thiazole from 5-(2-hydroxyethyl)-4-methylthiazole: step 1/1. Catalyzes the phosphorylation of the hydroxyl group of 4-methyl-5-beta-hydroxyethylthiazole (THZ). The sequence is that of Hydroxyethylthiazole kinase from Psychrobacter sp. (strain PRwf-1).